Here is a 257-residue protein sequence, read N- to C-terminus: Flagellar brake protein YcgR 1 (257 aa).

The span at 1–18 shows a compositional bias: polar residues; sequence MDTTQSNGQTDTQGQLHA. The tract at residues 1 to 30 is disordered; the sequence is MDTTQSNGQTDTQGQLHAQTAEGGNDFGRR. In terms of domain architecture, PilZ spans 133-246; sequence QRREYFRVDA…AENTLQRLIT (114 aa).

The protein belongs to the YcgR family. Monomer. Interacts with the flagellar basal bodies.

The protein resides in the bacterial flagellum basal body. Acts as a flagellar brake, regulating swimming and swarming in a bis-(3'-5') cyclic diguanylic acid (c-di-GMP)-dependent manner. Binds 1 c-di-GMP dimer per subunit. Increasing levels of c-di-GMP lead to decreased motility. The protein is Flagellar brake protein YcgR 1 of Paraburkholderia phytofirmans (strain DSM 17436 / LMG 22146 / PsJN) (Burkholderia phytofirmans).